Consider the following 866-residue polypeptide: Probable beta-glucosidase F (866 aa).

A signal peptide spans 1–20; that stretch reads MAAFPAYLALLSYLVPGALS. N-linked (GlcNAc...) asparagine glycosylation is found at Asn-65, Asn-73, and Asn-257. Asp-285 is a catalytic residue. Residues Asn-328, Asn-360, Asn-395, Asn-421, Asn-474, Asn-659, Asn-664, and Asn-724 are each glycosylated (N-linked (GlcNAc...) asparagine). A disordered region spans residues 725-748; it reads SSKTYPYPDGYTTEPKPAPRAGGA.

Belongs to the glycosyl hydrolase 3 family.

The protein resides in the secreted. It carries out the reaction Hydrolysis of terminal, non-reducing beta-D-glucosyl residues with release of beta-D-glucose.. The protein operates within glycan metabolism; cellulose degradation. In terms of biological role, beta-glucosidases are one of a number of cellulolytic enzymes involved in the degradation of cellulosic biomass. Catalyzes the last step releasing glucose from the inhibitory cellobiose. The protein is Probable beta-glucosidase F (bglF) of Aspergillus flavus (strain ATCC 200026 / FGSC A1120 / IAM 13836 / NRRL 3357 / JCM 12722 / SRRC 167).